A 2145-amino-acid chain; its full sequence is U5 small nuclear ribonucleoprotein 200 kDa helicase (2145 aa).

Disordered regions lie at residues 54-82 (GDRAIKGKAPVQDQKKKRKKKDDEKAQQF) and 202-243 (DSDE…GDGH). Acidic residues predominate over residues 220-231 (SEEESEEEEGVD). Residues 484–667 (DSALRSKEHL…FLRVKPEHLH (184 aa)) enclose the Helicase ATP-binding 1 domain. 497-504 (APTGAGKT) contributes to the ATP binding site. The DEAH box motif lies at 609-612 (DEIH). Residues 677 to 894 (PLEQQYIGVT…QMVSRLTDML (218 aa)) enclose the Helicase C-terminal domain. In terms of domain architecture, SEC63 1 spans 975–1278 (TELGRIASHF…IGAETVLPIS (304 aa)). In terms of domain architecture, Helicase ATP-binding 2 spans 1331 to 1506 (RTVFESNENV…WLGCSASATF (176 aa)). 1344-1351 (APNGSGKT) contacts ATP. A DEAH box motif is present at residues 1448–1451 (DDLH). The SEC63 2 domain maps to 1812-2124 (LNLGMIASYY…YLGADQEFDV (313 aa)).

The protein belongs to the helicase family. SKI2 subfamily.

It localises to the nucleus. The catalysed reaction is ATP + H2O = ADP + phosphate + H(+). Its function is as follows. Catalyzes the ATP-dependent unwinding of U4/U6 RNA duplices, an essential step in the assembly of a catalytically active spliceosome. Plays a role in pre-mRNA splicing. This chain is U5 small nuclear ribonucleoprotein 200 kDa helicase, found in Caenorhabditis elegans.